The primary structure comprises 275 residues: Calcium-binding protein 4 (275 aa).

The span at 1–12 shows a compositional bias: polar residues; the sequence is MTTEQARGQQGP. Positions 1–112 are disordered; that stretch reads MTTEQARGQQ…SLHDAAQRTY (112 aa). The span at 38–55 shows a compositional bias: basic residues; sequence TRKRSKKERGLRGSRKRT. Serine 42 is modified (phosphoserine). EF-hand domains lie at 129–164, 183–200, 206–241, and 243–275; these read EELD…LGYM, GRVD…KLRE, LGVR…LLGE, and LAGP…LSRH. 5 residues coordinate Ca(2+): aspartate 142, aspartate 144, aspartate 146, tyrosine 148, and glutamate 153. Residues aspartate 219, aspartate 221, aspartate 223, arginine 225, glutamate 230, aspartate 256, asparagine 258, aspartate 260, threonine 262, and glutamate 267 each contribute to the Ca(2+) site.

Interacts with CACNA1F and CACNA1D (via IQ domain) in a calcium independent manner. Interacts (via N-terminus) with UNC119. In terms of processing, phosphorylated. Phosphorylation levels change with the light conditions and regulate the activity. Expressed in retina and in the inner hair cells (IHC) of the cochlea.

It localises to the cytoplasm. The protein resides in the presynapse. Functionally, involved in normal synaptic function through regulation of Ca(2+) influx and neurotransmitter release in photoreceptor synaptic terminals and in auditory transmission. Modulator of CACNA1D and CACNA1F, suppressing the calcium-dependent inactivation and shifting the activation range to more hyperpolarized voltages. In Homo sapiens (Human), this protein is Calcium-binding protein 4 (CABP4).